The sequence spans 163 residues: MSDKAAGETKNGNGATTEPSLNILAQYVKDLSFESPGAPLSLRPREKAPSININVNVNANPLSETDFDVVLTLEAKAVDGKDILFNTELVYGGVFRIQGIPQEHMLPLLFIECPRLLFPFARQIIADATRNGGYPPLMIDPIDFAQMFQQRMAEEQAKSAVKS.

It belongs to the SecB family. Homotetramer, a dimer of dimers. One homotetramer interacts with 1 SecA dimer.

The protein resides in the cytoplasm. One of the proteins required for the normal export of preproteins out of the cell cytoplasm. It is a molecular chaperone that binds to a subset of precursor proteins, maintaining them in a translocation-competent state. It also specifically binds to its receptor SecA. The polypeptide is Protein-export protein SecB (Brucella abortus (strain S19)).